The following is a 474-amino-acid chain: Probable glycine dehydrogenase (decarboxylating) subunit 2 (474 aa).

An N6-(pyridoxal phosphate)lysine modification is found at Lys-266.

This sequence belongs to the GcvP family. C-terminal subunit subfamily. In terms of assembly, the glycine cleavage system is composed of four proteins: P, T, L and H. In this organism, the P 'protein' is a heterodimer of two subunits. Requires pyridoxal 5'-phosphate as cofactor.

The catalysed reaction is N(6)-[(R)-lipoyl]-L-lysyl-[glycine-cleavage complex H protein] + glycine + H(+) = N(6)-[(R)-S(8)-aminomethyldihydrolipoyl]-L-lysyl-[glycine-cleavage complex H protein] + CO2. Its function is as follows. The glycine cleavage system catalyzes the degradation of glycine. The P protein binds the alpha-amino group of glycine through its pyridoxal phosphate cofactor; CO(2) is released and the remaining methylamine moiety is then transferred to the lipoamide cofactor of the H protein. This Thermus thermophilus (strain ATCC 27634 / DSM 579 / HB8) protein is Probable glycine dehydrogenase (decarboxylating) subunit 2.